We begin with the raw amino-acid sequence, 337 residues long: MAQEKDCRIVFMGTPGFAAASLRRLAAWPRAHIVAVYTQPDRPAGRGQKLAMSAVKKLALELGIPVCQPASLKGAEAQAELAAFRPDVLAVAAYGLILPDAVLDMPRLAPVNVHASILPGLRGAAPIQRAVMEGWQPGARAGISIMRIGSRLDAGPVYAMGDTPIGEHTSGSLHDALAELGAELLVTVLDDLMEGRAVAVEQDESLATHAAKLGKRDGYINWTRSAAEAHAQIRGVTPRPGARTVLHLDAGTDFEARSMPLIVSPGTIGETAAGTAPGSVRHDGQDISIACGDCWYTLGMVRPEGRKDMPVRDLLNGSLKNLPQGVCGEARSPEESL.

Residue 116-119 coordinates (6S)-5,6,7,8-tetrahydrofolate; the sequence is SILP.

The protein belongs to the Fmt family.

It carries out the reaction L-methionyl-tRNA(fMet) + (6R)-10-formyltetrahydrofolate = N-formyl-L-methionyl-tRNA(fMet) + (6S)-5,6,7,8-tetrahydrofolate + H(+). In terms of biological role, attaches a formyl group to the free amino group of methionyl-tRNA(fMet). The formyl group appears to play a dual role in the initiator identity of N-formylmethionyl-tRNA by promoting its recognition by IF2 and preventing the misappropriation of this tRNA by the elongation apparatus. The polypeptide is Methionyl-tRNA formyltransferase (Desulfovibrio desulfuricans (strain ATCC 27774 / DSM 6949 / MB)).